The following is a 355-amino-acid chain: Histidinol-phosphate aminotransferase (355 aa).

An N6-(pyridoxal phosphate)lysine modification is found at K218.

Belongs to the class-II pyridoxal-phosphate-dependent aminotransferase family. Histidinol-phosphate aminotransferase subfamily. As to quaternary structure, homodimer. The cofactor is pyridoxal 5'-phosphate.

It carries out the reaction L-histidinol phosphate + 2-oxoglutarate = 3-(imidazol-4-yl)-2-oxopropyl phosphate + L-glutamate. It functions in the pathway amino-acid biosynthesis; L-histidine biosynthesis; L-histidine from 5-phospho-alpha-D-ribose 1-diphosphate: step 7/9. The chain is Histidinol-phosphate aminotransferase from Chlorobium limicola (strain DSM 245 / NBRC 103803 / 6330).